The following is a 126-amino-acid chain: Large ribosomal subunit protein bL12 (126 aa).

This sequence belongs to the bacterial ribosomal protein bL12 family. In terms of assembly, homodimer. Part of the ribosomal stalk of the 50S ribosomal subunit. Forms a multimeric L10(L12)X complex, where L10 forms an elongated spine to which 2 to 4 L12 dimers bind in a sequential fashion. Binds GTP-bound translation factors.

Functionally, forms part of the ribosomal stalk which helps the ribosome interact with GTP-bound translation factors. Is thus essential for accurate translation. This is Large ribosomal subunit protein bL12 from Corynebacterium diphtheriae (strain ATCC 700971 / NCTC 13129 / Biotype gravis).